A 346-amino-acid polypeptide reads, in one-letter code: 3-keto-steroid reductase ERG27 (346 aa).

Positions 19, 42, and 48 each coordinate NADP(+). Catalysis depends on proton donor residues S182 and Y205. Positions 205, 209, and 241 each coordinate NADP(+). Catalysis depends on K209, which acts as the Lowers pKa of active site Tyr. Residues 242 to 262 traverse the membrane as a helical segment; that stretch reads FSFFQYLNVFTYYGMLFLFYL. Residue N272 is glycosylated (N-linked (GlcNAc...) asparagine).

Belongs to the short-chain dehydrogenases/reductases (SDR) family. ERG27 subfamily. In terms of assembly, heterotetramer of ERG25, ERG26, ERG27 and ERG28. ERG28 acts as a scaffold to tether ERG27 and other 4,4-demethylation-related enzymes, forming a demethylation enzyme complex, in the endoplasmic reticulum. Interacts with ERG25 and ERG28. Also interacts with ERG7, but only in lipid particles.

It localises to the endoplasmic reticulum membrane. It is found in the lipid droplet. The catalysed reaction is 3-dehydro-4alpha-methylzymosterol + NADPH + H(+) = 4alpha-methylzymosterol + NADP(+). Its pathway is steroid biosynthesis; zymosterol biosynthesis; zymosterol from lanosterol: step 5/6. 3-keto-steroid reductase; part of the third module of ergosterol biosynthesis pathway that includes the late steps of the pathway. ERG27 is a catalytic component of the C-4 demethylation complex that catalyzes the reduction of the keto group on the C-3. The third module or late pathway involves the ergosterol synthesis itself through consecutive reactions that mainly occur in the endoplasmic reticulum (ER) membrane. Firstly, the squalene synthase ERG9 catalyzes the condensation of 2 farnesyl pyrophosphate moieties to form squalene, which is the precursor of all steroids. Squalene synthase is crucial for balancing the incorporation of farnesyl diphosphate (FPP) into sterol and nonsterol isoprene synthesis. Secondly, the squalene epoxidase ERG1 catalyzes the stereospecific oxidation of squalene to (S)-2,3-epoxysqualene, which is considered to be a rate-limiting enzyme in steroid biosynthesis. Then, the lanosterol synthase ERG7 catalyzes the cyclization of (S)-2,3 oxidosqualene to lanosterol, a reaction that forms the sterol core. In the next steps, lanosterol is transformed to zymosterol through a complex process involving various demethylation, reduction and desaturation reactions. The lanosterol 14-alpha-demethylase ERG11 (also known as CYP51) catalyzes C14-demethylation of lanosterol to produce 4,4'-dimethyl cholesta-8,14,24-triene-3-beta-ol, which is critical for ergosterol biosynthesis. The C-14 reductase ERG24 reduces the C14=C15 double bond of 4,4-dimethyl-cholesta-8,14,24-trienol to produce 4,4-dimethyl-cholesta-8,24-dienol. 4,4-dimethyl-cholesta-8,24-dienol is substrate of the C-4 demethylation complex ERG25-ERG26-ERG27 in which ERG25 catalyzes the three-step monooxygenation required for the demethylation of 4,4-dimethyl and 4alpha-methylsterols, ERG26 catalyzes the oxidative decarboxylation that results in a reduction of the 3-beta-hydroxy group at the C-3 carbon to an oxo group, and ERG27 is responsible for the reduction of the keto group on the C-3. ERG28 has a role as a scaffold to help anchor ERG25, ERG26 and ERG27 to the endoplasmic reticulum and ERG29 regulates the activity of the iron-containing C4-methylsterol oxidase ERG25. Then, the sterol 24-C-methyltransferase ERG6 catalyzes the methyl transfer from S-adenosyl-methionine to the C-24 of zymosterol to form fecosterol. The C-8 sterol isomerase ERG2 catalyzes the reaction which results in unsaturation at C-7 in the B ring of sterols and thus converts fecosterol to episterol. The sterol-C5-desaturase ERG3 then catalyzes the introduction of a C-5 double bond in the B ring to produce 5-dehydroepisterol. The C-22 sterol desaturase ERG5 further converts 5-dehydroepisterol into ergosta-5,7,22,24(28)-tetraen-3beta-ol by forming the C-22(23) double bond in the sterol side chain. Finally, ergosta-5,7,22,24(28)-tetraen-3beta-ol is substrate of the C-24(28) sterol reductase ERG4 to produce ergosterol. Functionally, facilitates the association of ERG7 with lipid particles preventing its digestion in the endoplasmic reticulum and the lipid particles. The protein is 3-keto-steroid reductase ERG27 of Candida albicans (Yeast).